We begin with the raw amino-acid sequence, 98 residues long: Aspartyl/glutamyl-tRNA(Asn/Gln) amidotransferase subunit C (98 aa).

A disordered region spans residues 77–98 (NEAPNPEGDFFRVPQILNTDEE).

It belongs to the GatC family. As to quaternary structure, heterotrimer of A, B and C subunits.

It carries out the reaction L-glutamyl-tRNA(Gln) + L-glutamine + ATP + H2O = L-glutaminyl-tRNA(Gln) + L-glutamate + ADP + phosphate + H(+). The enzyme catalyses L-aspartyl-tRNA(Asn) + L-glutamine + ATP + H2O = L-asparaginyl-tRNA(Asn) + L-glutamate + ADP + phosphate + 2 H(+). In terms of biological role, allows the formation of correctly charged Asn-tRNA(Asn) or Gln-tRNA(Gln) through the transamidation of misacylated Asp-tRNA(Asn) or Glu-tRNA(Gln) in organisms which lack either or both of asparaginyl-tRNA or glutaminyl-tRNA synthetases. The reaction takes place in the presence of glutamine and ATP through an activated phospho-Asp-tRNA(Asn) or phospho-Glu-tRNA(Gln). This chain is Aspartyl/glutamyl-tRNA(Asn/Gln) amidotransferase subunit C, found in Crocosphaera subtropica (strain ATCC 51142 / BH68) (Cyanothece sp. (strain ATCC 51142)).